Here is an 887-residue protein sequence, read N- to C-terminus: Alanine--tRNA ligase (887 aa).

Zn(2+)-binding residues include H575, H579, C677, and H681.

It belongs to the class-II aminoacyl-tRNA synthetase family. Zn(2+) is required as a cofactor.

Its subcellular location is the cytoplasm. The catalysed reaction is tRNA(Ala) + L-alanine + ATP = L-alanyl-tRNA(Ala) + AMP + diphosphate. Functionally, catalyzes the attachment of alanine to tRNA(Ala) in a two-step reaction: alanine is first activated by ATP to form Ala-AMP and then transferred to the acceptor end of tRNA(Ala). Also edits incorrectly charged Ser-tRNA(Ala) and Gly-tRNA(Ala) via its editing domain. This chain is Alanine--tRNA ligase, found in Geobacillus kaustophilus (strain HTA426).